Reading from the N-terminus, the 88-residue chain is Large ribosomal subunit protein bL27 (88 aa).

The tract at residues 1–23 is disordered; it reads MAHKKAGGSSRNGRDSAGRRLGV.

The protein belongs to the bacterial ribosomal protein bL27 family.

The polypeptide is Large ribosomal subunit protein bL27 (Methylorubrum extorquens (strain CM4 / NCIMB 13688) (Methylobacterium extorquens)).